The following is a 464-amino-acid chain: METEQPEETFPNTETNGEFGKRPAEDMEEEQAFKRSRNTDEMVELRILLQSKNAGAVIGKGGKNIKALRTDYNASVSVPDSSGPERILSISADIETIGEILKKIIPTLEEGLQLPSPTATSQLPLESDAVECLNYQHYKGSDFDCELRLLIHQSLAGGIIGVKGAKIKELRENTQTTIKLFQECCPQSTDRVVLIGGKPDRVVECIKIILDLISESPIKGRAQPYDPNFYDETYDYGGFTMMFDDRRGRPVGFPMRGRGGFDRMPPGRGGRPMPPSRRDYDDMSPRRGPPPPPPGRGGRGGSRARNLPLPPPPPPRGGDLMAYDRRGRPGDRYDGMVGFSADETWDSAIDTWSPSEWQMAYEPQGGSGYDYSYAGGRGSYGDLGGPIITTQVTIPKDLAGSIIGKGGQRIKQIRHESGASIKIDEPLEGSEDRIITITGTQDQIQNAQYLLQNSVKQYADVEGF.

M1 bears the N-acetylmethionine mark. The tract at residues 1–37 (METEQPEETFPNTETNGEFGKRPAEDMEEEQAFKRSR) is disordered. Positions 1-276 (METEQPEETF…GRGGRPMPPS (276 aa)) are necessary for interaction with DDX1. Residues 19 to 37 (FGKRPAEDMEEEQAFKRSR) are compositionally biased toward basic and acidic residues. K34 bears the N6-acetyllysine; alternate mark. Residue K34 forms a Glycyl lysine isopeptide (Lys-Gly) (interchain with G-Cter in SUMO1); alternate linkage. K34 is covalently cross-linked (Glycyl lysine isopeptide (Lys-Gly) (interchain with G-Cter in SUMO2); alternate). S36 is subject to Phosphoserine. T39 carries the post-translational modification Phosphothreonine. Residues 42–104 (MVELRILLQS…ETIGEILKKI (63 aa)) enclose the KH 1 domain. Residues K52 and K60 each participate in a glycyl lysine isopeptide (Lys-Gly) (interchain with G-Cter in SUMO2) cross-link. 2 consecutive repeat copies span residues 54–76 (AGAV…NASV) and 59–62 (GKGG). The 2 X 22 AA approximate repeats stretch occupies residues 54–421 (AGAVIGKGGK…QIRHESGASI (368 aa)). Residues 59-407 (GKGGKNIKAL…LAGSIIGKGG (349 aa)) form a 5 X 4 AA repeats of G-X-G-G region. Phosphoserine is present on residues S75 and S116. The 66-residue stretch at 144–209 (DCELRLLIHQ…DRVVECIKII (66 aa)) folds into the KH 2 domain. K163 participates in a covalent cross-link: Glycyl lysine isopeptide (Lys-Gly) (interchain with G-Cter in SUMO1); alternate. A Glycyl lysine isopeptide (Lys-Gly) (interchain with G-Cter in SUMO2); alternate cross-link involves residue K163. An N6-acetyllysine modification is found at K198. The interaction with ZIK1 stretch occupies residues 209 to 337 (ILDLISESPI…RPGDRYDGMV (129 aa)). Residues S214 and S216 each carry the phosphoserine modification. K219 is covalently cross-linked (Glycyl lysine isopeptide (Lys-Gly) (interchain with G-Cter in SUMO2); alternate). K219 bears the N6-succinyllysine; alternate mark. The tract at residues 236 to 273 (YGGFTMMFDDRRGRPVGFPMRGRGGFDRMPPGRGGRPM) is RNA-binding RGG-box. Repeat copies occupy residues 245 to 250 (DRRGRP), 257 to 260 (GRGG), and 267 to 270 (GRGG). The 2 X 6 AA approximate repeats stretch occupies residues 245–329 (DRRGRPVGFP…LMAYDRRGRP (85 aa)). The disordered stretch occupies residues 250–329 (PVGFPMRGRG…LMAYDRRGRP (80 aa)). The span at 252–266 (GFPMRGRGGFDRMPP) shows a compositional bias: low complexity. Residues 276 to 285 (SRRDYDDMSP) are compositionally biased toward basic and acidic residues. Residue S284 is modified to Phosphoserine. One copy of the 3-4 repeat lies at 295-298 (GRGG). At R316 the chain carries Omega-N-methylarginine. The stretch at 324–329 (DRRGRP) is one 2-2 repeat. The residue at position 377 (R377) is an Omega-N-methylarginine. S379 carries the post-translational modification Phosphoserine. Y380 is subject to Phosphotyrosine. The KH 3 domain maps to 387–451 (IITTQVTIPK…DQIQNAQYLL (65 aa)). 2 repeat units span residues 399 to 421 (AGSI…GASI) and 404 to 407 (GKGG). At K405 the chain carries N6-acetyllysine; alternate. K405 participates in a covalent cross-link: Glycyl lysine isopeptide (Lys-Gly) (interchain with G-Cter in SUMO2); alternate. S420 is modified (phosphoserine). K422 participates in a covalent cross-link: Glycyl lysine isopeptide (Lys-Gly) (interchain with G-Cter in SUMO1); alternate. K422 participates in a covalent cross-link: Glycyl lysine isopeptide (Lys-Gly) (interchain with G-Cter in SUMO2); alternate. Residue K422 forms a Glycyl lysine isopeptide (Lys-Gly) (interchain with G-Cter in SUMO); alternate linkage.

As to quaternary structure, identified in the spliceosome C complex. Interacts with ANKRD28, RBM42 and ZIK1. Interacts with DDX1. Interacts with MDM2; this interaction leads to ubiquitination and proteasomal degradation. Interacts with p53/TP53. Interacts with BRDT. Interacts with IVNS1ABP. Interacts with PPIA/CYPA. Part of a transcription inhibitory ribonucleoprotein complex composed at least of the circular RNA circZNF827, ZNF827 and HNRNPL. Post-translationally, sumoylated by CBX4. Sumoylation is increased upon DNA damage, such as that produced by doxorubicin, etoposide, UV light and camptothecin, due to enhanced CBX4 phosphorylation by HIPK2 under these conditions. Ubiquitinated by MDM2. Doxorubicin treatment does not affect monoubiquitination, but slightly decreases HNRNPK poly-ubiquitination. In terms of processing, O-glycosylated (O-GlcNAcylated), in a cell cycle-dependent manner.

The protein resides in the cytoplasm. The protein localises to the nucleus. It localises to the nucleoplasm. Its subcellular location is the cell projection. It is found in the podosome. One of the major pre-mRNA-binding proteins. Binds tenaciously to poly(C) sequences. Likely to play a role in the nuclear metabolism of hnRNAs, particularly for pre-mRNAs that contain cytidine-rich sequences. Can also bind poly(C) single-stranded DNA. Plays an important role in p53/TP53 response to DNA damage, acting at the level of both transcription activation and repression. When sumoylated, acts as a transcriptional coactivator of p53/TP53, playing a role in p21/CDKN1A and 14-3-3 sigma/SFN induction. As far as transcription repression is concerned, acts by interacting with long intergenic RNA p21 (lincRNA-p21), a non-coding RNA induced by p53/TP53. This interaction is necessary for the induction of apoptosis, but not cell cycle arrest. As part of a ribonucleoprotein complex composed at least of ZNF827, HNRNPL and the circular RNA circZNF827 that nucleates the complex on chromatin, may negatively regulate the transcription of genes involved in neuronal differentiation. This Bos taurus (Bovine) protein is Heterogeneous nuclear ribonucleoprotein K (HNRNPK).